The primary structure comprises 347 residues: Purine-rich element-binding protein gamma (347 aa).

2 disordered regions span residues 1–34 (MERA…YPQA) and 133–169 (GHRQ…HPHS). Residues 9-24 (GGGGRGRGGKNVGGSG) are compositionally biased toward gly residues. Residues 51 to 293 (AGGAAEIQEL…GIFLKVSEVR (243 aa)) mediate DNA binding. Residues 134–146 (HRQEHGHSKEQGS) show a composition bias toward basic and acidic residues. Phosphoserine is present on residues Ser160, Ser163, and Ser339.

Belongs to the PUR DNA-binding protein family. Isoform 1 is expressed in testis and glioblastoma. Isoform 2 is expressed in fetal lung.

It is found in the nucleus. In Homo sapiens (Human), this protein is Purine-rich element-binding protein gamma (PURG).